An 811-amino-acid chain; its full sequence is DNA mismatch repair protein MutS (811 aa).

583 to 590 (GPNMAGKS) serves as a coordination point for ATP.

The protein belongs to the DNA mismatch repair MutS family.

In terms of biological role, this protein is involved in the repair of mismatches in DNA. It is possible that it carries out the mismatch recognition step. This protein has a weak ATPase activity. The polypeptide is DNA mismatch repair protein MutS (Thermus thermophilus (strain ATCC BAA-163 / DSM 7039 / HB27)).